A 360-amino-acid chain; its full sequence is GTPase Obg (360 aa).

One can recognise an Obg domain in the interval 1–156 (MFVDSVEIII…KCVRLELKLI (156 aa)). Positions 157 to 360 (ADIGLVGFPN…LKFVLLEALP (204 aa)) constitute an OBG-type G domain. Residues 163–170 (GFPNAGKS), 188–192 (FTTLV), 210–213 (DIPG), 279–282 (NKCD), and 341–343 (SAV) contribute to the GTP site. Mg(2+)-binding residues include S170 and T190.

This sequence belongs to the TRAFAC class OBG-HflX-like GTPase superfamily. OBG GTPase family. Monomer. Mg(2+) serves as cofactor.

Its subcellular location is the cytoplasm. Functionally, an essential GTPase which binds GTP, GDP and possibly (p)ppGpp with moderate affinity, with high nucleotide exchange rates and a fairly low GTP hydrolysis rate. Plays a role in control of the cell cycle, stress response, ribosome biogenesis and in those bacteria that undergo differentiation, in morphogenesis control. This Helicobacter acinonychis (strain Sheeba) protein is GTPase Obg.